The sequence spans 228 residues: Heptaprenylglyceryl phosphate synthase (228 aa).

A sn-glycerol 1-phosphate-binding site is contributed by Lys12. The Mg(2+) site is built by Asp14 and Ser40. Sn-glycerol 1-phosphate is bound by residues 159-164, Gly189, and 209-210; these read YLEYSG and GN.

This sequence belongs to the GGGP/HepGP synthase family. Group I subfamily. As to quaternary structure, homodimer. The cofactor is Mg(2+).

It carries out the reaction sn-glycerol 1-phosphate + all-trans-heptaprenyl diphosphate = 3-heptaprenyl-sn-glycero-1-phosphate + diphosphate. Its pathway is membrane lipid metabolism; glycerophospholipid metabolism. Its function is as follows. Prenyltransferase that catalyzes in vivo the transfer of the heptaprenyl moiety of heptaprenyl pyrophosphate (HepPP; 35 carbon atoms) to the C3 hydroxyl of sn-glycerol-1-phosphate (G1P), producing heptaprenylglyceryl phosphate (HepGP). This reaction is an ether-bond-formation step in the biosynthesis of archaea-type G1P-based membrane lipids found in Bacillales. This chain is Heptaprenylglyceryl phosphate synthase, found in Bacillus licheniformis (strain ATCC 14580 / DSM 13 / JCM 2505 / CCUG 7422 / NBRC 12200 / NCIMB 9375 / NCTC 10341 / NRRL NRS-1264 / Gibson 46).